The following is a 294-amino-acid chain: Shikimate dehydrogenase (NADP(+)) (294 aa).

Residues 23–25 and Thr-70 contribute to the shikimate site; that span reads SRS. Catalysis depends on Lys-74, which acts as the Proton acceptor. Asn-95 and Asp-110 together coordinate shikimate. NADP(+)-binding positions include 135–139, 159–164, and Met-232; these read GAGGA and NRTASR. Residue Tyr-234 participates in shikimate binding. Gly-255 contacts NADP(+).

It belongs to the shikimate dehydrogenase family. Homodimer.

It carries out the reaction shikimate + NADP(+) = 3-dehydroshikimate + NADPH + H(+). It participates in metabolic intermediate biosynthesis; chorismate biosynthesis; chorismate from D-erythrose 4-phosphate and phosphoenolpyruvate: step 4/7. In terms of biological role, involved in the biosynthesis of the chorismate, which leads to the biosynthesis of aromatic amino acids. Catalyzes the reversible NADPH linked reduction of 3-dehydroshikimate (DHSA) to yield shikimate (SA). The polypeptide is Shikimate dehydrogenase (NADP(+)) (Cupriavidus pinatubonensis (strain JMP 134 / LMG 1197) (Cupriavidus necator (strain JMP 134))).